A 385-amino-acid polypeptide reads, in one-letter code: Methionine aminopeptidase 1 (385 aa).

Residues 6 to 59 form a C6H2-type zinc finger; the sequence is SRVCETEGCSSEAKLQCPTCIKLGIQGSYFCSQECFKGSWASHKLLHKKAKDDK. 8 residues coordinate Zn(2+): C9, C14, C22, C25, C36, C40, H48, and H52. Position 203 (H203) interacts with a protein. Positions 220, 231, and 294 each coordinate Zn(2+). Position 301 (H301) interacts with a protein. Residues E327 and E358 each coordinate Zn(2+).

The protein belongs to the peptidase M24A family. Methionine aminopeptidase type 1 subfamily. In terms of assembly, associates with the 60S ribosomal subunit of the 80S translational complex. Requires Zn(2+) as cofactor. Co(2+) serves as cofactor. The cofactor is Mn(2+). Fe(2+) is required as a cofactor.

It is found in the cytoplasm. It carries out the reaction Release of N-terminal amino acids, preferentially methionine, from peptides and arylamides.. Cotranslationally removes the N-terminal methionine from nascent proteins. The N-terminal methionine is often cleaved when the second residue in the primary sequence is small and uncharged (Met-Ala-, Cys, Gly, Pro, Ser, Thr, or Val). The chain is Methionine aminopeptidase 1 (metap1) from Xenopus tropicalis (Western clawed frog).